The sequence spans 193 residues: MLDKLKESLRNSPVIKKGEYDYFVNPVTDGIPLTEPELLEEVAEEIVRRFRPEADKIICIEAMGIHHATVLSLKTGIPFVVVRKRRYGLPGEVAVHQMTGYSEGELYINGVDSGDRVVVIDDVVSTGGTLLAVLEALREMDVDVRDVITVIDKGEGSRVVRERTGFTVKSLVKVDVIDGRVKVEDIPAGGPHD.

The protein belongs to the purine/pyrimidine phosphoribosyltransferase family. Archaeal HPRT subfamily. Homodimer.

The protein resides in the cytoplasm. It carries out the reaction IMP + diphosphate = hypoxanthine + 5-phospho-alpha-D-ribose 1-diphosphate. It catalyses the reaction GMP + diphosphate = guanine + 5-phospho-alpha-D-ribose 1-diphosphate. It participates in purine metabolism; IMP biosynthesis via salvage pathway; IMP from hypoxanthine: step 1/1. Its function is as follows. Catalyzes a salvage reaction resulting in the formation of IMP that is energically less costly than de novo synthesis. This chain is Hypoxanthine/guanine phosphoribosyltransferase, found in Methanothermobacter thermautotrophicus (strain ATCC 29096 / DSM 1053 / JCM 10044 / NBRC 100330 / Delta H) (Methanobacterium thermoautotrophicum).